Here is a 201-residue protein sequence, read N- to C-terminus: Small ribosomal subunit protein uS4c (201 aa).

The interval 20–43 (GLTSKRPRAGSDLRNQSRAGKKSQ) is disordered. Residues 89–150 (MRLDNILFRL…EQKSRVMIQN (62 aa)) enclose the S4 RNA-binding domain.

Belongs to the universal ribosomal protein uS4 family. In terms of assembly, part of the 30S ribosomal subunit. Contacts protein S5. The interaction surface between S4 and S5 is involved in control of translational fidelity.

It localises to the plastid. It is found in the chloroplast. Functionally, one of the primary rRNA binding proteins, it binds directly to 16S rRNA where it nucleates assembly of the body of the 30S subunit. With S5 and S12 plays an important role in translational accuracy. The sequence is that of Small ribosomal subunit protein uS4c (rps4) from Populus alba (White poplar).